The chain runs to 413 residues: Mitochondrial carrier protein MTM1 (413 aa).

3 Solcar repeats span residues I59–R193, M205–R305, and G318–V406. 6 helical membrane-spanning segments follow: residues V65–V85, N170–F190, A204–Y226, Q284–K304, L316–A336, and L378–F399.

Belongs to the mitochondrial carrier (TC 2.A.29) family. As to expression, ubiquitous.

It is found in the mitochondrion inner membrane. Involved in the mitochondrial activation of MSD1 by specifically facilitating insertion of the essential manganese cofactor. Has the ability to activate iron regulon in an iron-dependent manner. The sequence is that of Mitochondrial carrier protein MTM1 (MTM1) from Arabidopsis thaliana (Mouse-ear cress).